The primary structure comprises 221 residues: GTPase Obg (221 aa).

The OBG-type G domain occupies 1–61; the sequence is PSALRLVLLN…LKYKLLEIVQ (61 aa). GTP-binding positions include 10–13 and 42–44; these read NKAD and SAV. Residues 82-162 form the OCT domain; it reads VVHRTKGQFQ…IGGISFEWEP (81 aa).

It belongs to the TRAFAC class OBG-HflX-like GTPase superfamily. OBG GTPase family. Monomer. Mg(2+) is required as a cofactor.

Its subcellular location is the cytoplasm. Its function is as follows. An essential GTPase which binds GTP, GDP and possibly (p)ppGpp with moderate affinity, with high nucleotide exchange rates and a fairly low GTP hydrolysis rate. Plays a role in control of the cell cycle, stress response, ribosome biogenesis and in those bacteria that undergo differentiation, in morphogenesis control. This chain is GTPase Obg, found in Corynebacterium melassecola.